Here is a 352-residue protein sequence, read N- to C-terminus: Protein RecA (352 aa).

67-74 serves as a coordination point for ATP; that stretch reads GPESSGKT.

The protein belongs to the RecA family.

Its subcellular location is the cytoplasm. Its function is as follows. Can catalyze the hydrolysis of ATP in the presence of single-stranded DNA, the ATP-dependent uptake of single-stranded DNA by duplex DNA, and the ATP-dependent hybridization of homologous single-stranded DNAs. It interacts with LexA causing its activation and leading to its autocatalytic cleavage. This chain is Protein RecA, found in Enterobacter sp. (strain 638).